Here is a 180-residue protein sequence, read N- to C-terminus: MALPLRTDTPLTLVPLSWLLGRWEGAGVLGHPARGDSDTRFGQVVEFGHDGRDFLTYTSTTWALDEDGSTTEPLDVETGYWRPQPVDLDTPAPAEGPRPVELEVLLAHPTGVVEVLVGTARGPRIDLSSDVVARTATAHEYTAGNRMYGMVEGDLLWALDVALEGHPLRSYASARLKRVS.

A GXWXGXG motif is present at residues 21 to 27; that stretch reads GRWEGAG.

It belongs to the nitrobindin family.

This chain is Ferric nitrobindin-like protein, found in Kineococcus radiotolerans (strain ATCC BAA-149 / DSM 14245 / SRS30216).